Reading from the N-terminus, the 189-residue chain is Elongation factor P (189 aa).

This sequence belongs to the elongation factor P family.

Its subcellular location is the cytoplasm. The protein operates within protein biosynthesis; polypeptide chain elongation. Functionally, involved in peptide bond synthesis. Stimulates efficient translation and peptide-bond synthesis on native or reconstituted 70S ribosomes in vitro. Probably functions indirectly by altering the affinity of the ribosome for aminoacyl-tRNA, thus increasing their reactivity as acceptors for peptidyl transferase. The chain is Elongation factor P from Chloroflexus aggregans (strain MD-66 / DSM 9485).